Consider the following 63-residue polypeptide: Iota-crystallin (63 aa).

The protein belongs to the calycin superfamily. Fatty-acid binding protein (FABP) family.

Its function is as follows. Binds vitamin A2 in the eye lens and thus functions as a UV filter. Intracellular transport of retinol. The polypeptide is Iota-crystallin (CRBPI) (Gonatodes vittatus (Wiegmann's striped gecko)).